Reading from the N-terminus, the 193-residue chain is Acyl carrier protein phosphodiesterase (193 aa).

Belongs to the AcpH family.

The enzyme catalyses holo-[ACP] + H2O = apo-[ACP] + (R)-4'-phosphopantetheine + H(+). Its function is as follows. Converts holo-ACP to apo-ACP by hydrolytic cleavage of the phosphopantetheine prosthetic group from ACP. This chain is Acyl carrier protein phosphodiesterase, found in Serratia proteamaculans (strain 568).